A 78-amino-acid chain; its full sequence is ATP synthase subunit c (78 aa).

The next 2 membrane-spanning stretches (helical) occupy residues 9-29 (AFIG…GQGW) and 56-76 (AAVT…LVFV).

This sequence belongs to the ATPase C chain family. As to quaternary structure, F-type ATPases have 2 components, F(1) - the catalytic core - and F(0) - the membrane proton channel. F(1) has five subunits: alpha(3), beta(3), gamma(1), delta(1), epsilon(1). F(0) has three main subunits: a(1), b(2) and c(10-14). The alpha and beta chains form an alternating ring which encloses part of the gamma chain. F(1) is attached to F(0) by a central stalk formed by the gamma and epsilon chains, while a peripheral stalk is formed by the delta and b chains.

Its subcellular location is the cell membrane. F(1)F(0) ATP synthase produces ATP from ADP in the presence of a proton or sodium gradient. F-type ATPases consist of two structural domains, F(1) containing the extramembraneous catalytic core and F(0) containing the membrane proton channel, linked together by a central stalk and a peripheral stalk. During catalysis, ATP synthesis in the catalytic domain of F(1) is coupled via a rotary mechanism of the central stalk subunits to proton translocation. Its function is as follows. Key component of the F(0) channel; it plays a direct role in translocation across the membrane. A homomeric c-ring of between 10-14 subunits forms the central stalk rotor element with the F(1) delta and epsilon subunits. The chain is ATP synthase subunit c from Malacoplasma penetrans (strain HF-2) (Mycoplasma penetrans).